The following is a 233-amino-acid chain: Probable 2-phosphosulfolactate phosphatase (233 aa).

This sequence belongs to the ComB family. The cofactor is Mg(2+).

It catalyses the reaction (2R)-O-phospho-3-sulfolactate + H2O = (2R)-3-sulfolactate + phosphate. The protein is Probable 2-phosphosulfolactate phosphatase of Symbiobacterium thermophilum (strain DSM 24528 / JCM 14929 / IAM 14863 / T).